A 21-amino-acid chain; its full sequence is Hemolymph 65 kDa lectin BG04 (21 aa).

As to expression, hemolymph.

The protein localises to the secreted. Binds and precipitates antigens of the parasite Echinostoma paraensei. This Biomphalaria glabrata (Bloodfluke planorb) protein is Hemolymph 65 kDa lectin BG04 (BG04).